We begin with the raw amino-acid sequence, 433 residues long: Shufflon protein C' (433 aa).

Positions 1 to 361 are constant region; that stretch reads MKKYDRGWAS…TGAILSCQSG (361 aa). The variable region stretch occupies residues 362–433; it reads RWSGGNKINY…HVDAYCCPFN (72 aa).

This is Shufflon protein C' from Escherichia coli.